A 199-amino-acid polypeptide reads, in one-letter code: Protein-methionine-sulfoxide reductase heme-binding subunit MsrQ (199 aa).

Transmembrane regions (helical) follow at residues 8–28 (ITWL…WLFW), 82–102 (LWCF…ELGI), 116–136 (PYLT…LTST), 149–169 (FLHN…LWSV), and 171–191 (ILSP…AWRY).

This sequence belongs to the MsrQ family. Heterodimer of a catalytic subunit (MsrP) and a heme-binding subunit (MsrQ). The cofactor is FMN. Heme b serves as cofactor.

Its subcellular location is the cell inner membrane. Its function is as follows. Part of the MsrPQ system that repairs oxidized periplasmic proteins containing methionine sulfoxide residues (Met-O), using respiratory chain electrons. Thus protects these proteins from oxidative-stress damage caused by reactive species of oxygen and chlorine generated by the host defense mechanisms. MsrPQ is essential for the maintenance of envelope integrity under bleach stress, rescuing a wide series of structurally unrelated periplasmic proteins from methionine oxidation. MsrQ provides electrons for reduction to the reductase catalytic subunit MsrP, using the quinone pool of the respiratory chain. This chain is Protein-methionine-sulfoxide reductase heme-binding subunit MsrQ, found in Enterobacter sp. (strain 638).